The chain runs to 254 residues: Alcohol dehydrogenase 2 (254 aa).

Residue 10 to 33 (FVAGLGGIGLDTSREIVKSGPKNL) participates in NAD(+) binding. Serine 138 is a substrate binding site. Tyrosine 151 serves as the catalytic Proton acceptor.

Belongs to the short-chain dehydrogenases/reductases (SDR) family. As to quaternary structure, homodimer.

The enzyme catalyses a primary alcohol + NAD(+) = an aldehyde + NADH + H(+). The catalysed reaction is a secondary alcohol + NAD(+) = a ketone + NADH + H(+). The protein is Alcohol dehydrogenase 2 (Adh2) of Drosophila hydei (Fruit fly).